The sequence spans 212 residues: MELRNTKLEQLFYIYHRNLKYRCPMQYLTKRGFNLQDLLSVGGGLAYLGEKQWLNLSLYNFNNQLVGFLSRKVGFEKKFLYLPINKPPSKSESFLGLKHLPTETNTIYLVEGDFDWLAFRKGGILNCLPLCGLTLSDKQMKFFQQSKIEKVVLCLDNDFAGKVAAANLERILKNAGFQVKVVQLKGKVKDWNELLLLYPKNWAKALRDHLAL.

The 83-residue stretch at Asn105 to Lys187 folds into the Toprim domain.

This is an uncharacterized protein from Mycoplasma pneumoniae (strain ATCC 29342 / M129 / Subtype 1) (Mycoplasmoides pneumoniae).